The chain runs to 527 residues: ARS-binding protein 2 (527 aa).

3 disordered regions span residues 160-184 (PDVNSSSISTMRTSTSPSNWIHSAS), 219-265 (SHHM…NSHN), and 282-344 (IDPD…IKRL). The span at 164-177 (SSSISTMRTSTSPS) shows a compositional bias: low complexity. The span at 225–239 (RGSQQAHQTTPQNHS) shows a compositional bias: polar residues. Basic and acidic residues predominate over residues 284-303 (PDWHQWPDDLRDVSSPKESD). Serine 297, serine 298, and serine 302 each carry phosphoserine. Residues 328 to 343 (PRKRGRPPGARNKIKR) show a composition bias toward basic residues.

The protein localises to the nucleus. Binds, preferentially, to the Maundrell ARS consensus sequence within ARS3002. This is ARS-binding protein 2 (abp2) from Schizosaccharomyces pombe (strain 972 / ATCC 24843) (Fission yeast).